A 542-amino-acid polypeptide reads, in one-letter code: Valine N-monooxygenase 1 (542 aa).

Residues Met1 to Ser21 are Cytoplasmic-facing. A helical; Signal-anchor for type II membrane protein transmembrane segment spans residues Ser22–Val42. The Lumenal portion of the chain corresponds to Lys43–Pro542. The N-linked (GlcNAc...) asparagine glycan is linked to Asn278. Cys478 is a heme binding site. Asn506 carries an N-linked (GlcNAc...) asparagine glycan.

It belongs to the cytochrome P450 family. Heme is required as a cofactor. As to expression, expressed in the epidermis, the next two cortex cell layers, the endodermis and the pericycle of leaf petioles. Strong expression around the laticifers among the phloem cells and in parenchymatic cells between the protoxylem and the metaxylem cells. In the leaves, preferentially expressed in the mesophyll cells adjacent to the epidermis.

The protein localises to the microsome membrane. It catalyses the reaction L-valine + 2 reduced [NADPH--hemoprotein reductase] + 2 O2 = (E)-2-methylpropanal oxime + 2 oxidized [NADPH--hemoprotein reductase] + CO2 + 3 H2O + 2 H(+). The catalysed reaction is L-valine + reduced [NADPH--hemoprotein reductase] + O2 = N-hydroxy-L-valine + oxidized [NADPH--hemoprotein reductase] + H2O + 2 H(+). It carries out the reaction N-hydroxy-L-valine + reduced [NADPH--hemoprotein reductase] + O2 = N,N-dihydroxy-L-valine + oxidized [NADPH--hemoprotein reductase] + H2O + H(+). The enzyme catalyses L-isoleucine + 2 reduced [NADPH--hemoprotein reductase] + 2 O2 = (1E,2S)-2-methylbutanal oxime + 2 oxidized [NADPH--hemoprotein reductase] + CO2 + 3 H2O + 2 H(+). It catalyses the reaction L-isoleucine + reduced [NADPH--hemoprotein reductase] + O2 = N-hydroxy-L-isoleucine + oxidized [NADPH--hemoprotein reductase] + H2O + 2 H(+). The catalysed reaction is N-hydroxy-L-isoleucine + reduced [NADPH--hemoprotein reductase] + O2 = N,N-dihydroxy-L-isoleucine + oxidized [NADPH--hemoprotein reductase] + H2O + H(+). It participates in secondary metabolite biosynthesis. Inhibited by tetcyclasis but not by 1-aminobenzotriazole (ABT). Involved in the biosynthesis of the cyanogenic glucosides linamarin and lotaustralin. Can use L-valine or L-isoleucine as substrate, but not L-leucine, L-phenylalanine, L-tyrosine, D-valine or D-isoleucine. Catalyzes multi-step reactions starting with two successive N-hydroxylations using L-valine and L-isoleucine as substrates leading to the formation of N,N-dihydroxy-L-valine and N,N-dihydroxy-L-isoleucine, respectively; following spontaneous reactions lead to the production of (E)-2-methylpropanal oxime and (1E,2S)-2-methylbutanal oxime, respectively. The sequence is that of Valine N-monooxygenase 1 from Manihot esculenta (Cassava).